A 239-amino-acid polypeptide reads, in one-letter code: 2,3,4,5-tetrahydropyridine-2,6-dicarboxylate N-acetyltransferase (239 aa).

This sequence belongs to the transferase hexapeptide repeat family. DapH subfamily.

The enzyme catalyses (S)-2,3,4,5-tetrahydrodipicolinate + acetyl-CoA + H2O = L-2-acetamido-6-oxoheptanedioate + CoA. It participates in amino-acid biosynthesis; L-lysine biosynthesis via DAP pathway; LL-2,6-diaminopimelate from (S)-tetrahydrodipicolinate (acetylase route): step 1/3. In terms of biological role, catalyzes the transfer of an acetyl group from acetyl-CoA to tetrahydrodipicolinate. The chain is 2,3,4,5-tetrahydropyridine-2,6-dicarboxylate N-acetyltransferase from Staphylococcus aureus (strain JH9).